We begin with the raw amino-acid sequence, 529 residues long: Bifunctional purine biosynthesis protein PurH (529 aa).

The 148-residue stretch at 1 to 148 folds into the MGS-like domain; the sequence is MQQRRPVRRA…KNHKDVAIVV (148 aa).

Belongs to the PurH family.

The enzyme catalyses (6R)-10-formyltetrahydrofolate + 5-amino-1-(5-phospho-beta-D-ribosyl)imidazole-4-carboxamide = 5-formamido-1-(5-phospho-D-ribosyl)imidazole-4-carboxamide + (6S)-5,6,7,8-tetrahydrofolate. It carries out the reaction IMP + H2O = 5-formamido-1-(5-phospho-D-ribosyl)imidazole-4-carboxamide. It functions in the pathway purine metabolism; IMP biosynthesis via de novo pathway; 5-formamido-1-(5-phospho-D-ribosyl)imidazole-4-carboxamide from 5-amino-1-(5-phospho-D-ribosyl)imidazole-4-carboxamide (10-formyl THF route): step 1/1. The protein operates within purine metabolism; IMP biosynthesis via de novo pathway; IMP from 5-formamido-1-(5-phospho-D-ribosyl)imidazole-4-carboxamide: step 1/1. This Salmonella newport (strain SL254) protein is Bifunctional purine biosynthesis protein PurH.